A 542-amino-acid chain; its full sequence is Chaperonin GroEL (542 aa).

ATP is bound by residues 29–32 (TLGP), K50, 86–90 (DGTTT), G415, and D495.

The protein belongs to the chaperonin (HSP60) family. In terms of assembly, forms a cylinder of 14 subunits composed of two heptameric rings stacked back-to-back. Interacts with the co-chaperonin GroES.

Its subcellular location is the cytoplasm. The catalysed reaction is ATP + H2O + a folded polypeptide = ADP + phosphate + an unfolded polypeptide.. Together with its co-chaperonin GroES, plays an essential role in assisting protein folding. The GroEL-GroES system forms a nano-cage that allows encapsulation of the non-native substrate proteins and provides a physical environment optimized to promote and accelerate protein folding. In Azobacteroides pseudotrichonymphae genomovar. CFP2, this protein is Chaperonin GroEL.